We begin with the raw amino-acid sequence, 353 residues long: Terpene synthase 3 (353 aa).

Mg(2+) contacts are provided by aspartate 118, asparagine 261, and glutamate 269. Positions 118–122 match the D(D/E)XX(D/E) motif motif; it reads DDLLE. The NSE motif signature appears at 261 to 269; sequence NDTFLLKKE. Residues 342-349 carry the WxxxxxRY motif motif; the sequence is WCSKTTRY.

Belongs to the terpene synthase family. Requires Mg(2+) as cofactor.

In terms of biological role, terpene synthase that may be involved in the production of volatile terpenoids. Does not show detectable terpene products with either farnesyl diphosphate (FPP) or geranyl diphosphate (GPP). P.polycephalum has a unique biology and these volatile terpenoids could function in internal communication of P.polycephalum, to mark the territory that have been explored, or they may be involved in chemotaxis. In Physarum polycephalum (Slime mold), this protein is Terpene synthase 3.